Consider the following 654-residue polypeptide: MDELLGEALSAENQAGESTVESEKLVTPEDVMTISSLEQRTLNPDLFLYKELVKAHLGERAASVIGMLVALGRLSVRELVEKIDGMDVDSVKTTLVSLTQLRCVKYLQETAISGKKTTYYYYNEEGIHILLYSGLIIDEIITQMRVNDEEEHKQLVAEIVQNVISLGSLTVEDYLSSVTSDSMKYTISSLFVQLCEMGYLIQISKLHYTPIEDLWQFLYEKHYKNIPRNSPLSDLKKRSQAKMNAKTDFAKIINKPNELSQILTVDPKTSLRIVKPTVSLTINLDRFMKGRRSKQLINLAKTRVGSVTAQVYKIALRLTEQKSPKIRDPLTQTGLLQDLEEAKSFQDEAELVEEKTPGLTFNAIDLARHLPAELDLRGSLLSRKPSDNKKRSGSNAAASLPSKKLKTEDGFVIPALPAAVSKSLQESGDTQEEDEEEEDLDADTEDPHSASLINSHLKILASSNFPFLNETKPGVYYVPYSKLMPVLKSSVYEYVIASTLGPSAMRLSRCIRDNKLVSEKIINSTALMKEKDIRSTLASLIRYNSVEIQEVPRTADRSASRAVFLFRCKETHSYNFMRQNLEWNMANLLFKKEKLKQENSTLLKKANRDDVKGRENELLLPSELNQLKMVNERELNVFARLSRLLSLWEVFQMA.

A Phosphothreonine modification is found at Thr-27. Disordered regions lie at residues 381-401 (LSRKPSDNKKRSGSNAAASLP) and 422-448 (KSLQESGDTQEEDEEEEDLDADTEDPH). Phosphoserine is present on residues Ser-392 and Ser-394. Acidic residues predominate over residues 429–444 (DTQEEDEEEEDLDADT). The leucine-zipper stretch occupies residues 581-602 (LEWNMANLLFKKEKLKQENSTL).

Belongs to the RNA polymerase beta chain family. As to quaternary structure, component of the RNA polymerase III (Pol III) complex consisting of 17 subunits.

It is found in the cytoplasm. The protein localises to the nucleus. In terms of biological role, DNA-dependent RNA polymerase catalyzes the transcription of DNA into RNA using the four ribonucleoside triphosphates as substrates. Specific core component of RNA polymerase III which synthesizes small RNAs, such as 5S rRNA and tRNAs. The chain is DNA-directed RNA polymerase III subunit RPC3 (RPC82) from Saccharomyces cerevisiae (strain YJM789) (Baker's yeast).